The sequence spans 58 residues: uncharacterized protein (58 aa).

This is an uncharacterized protein from Treponema pallidum (strain Nichols).